The chain runs to 740 residues: Elongation factor 2 (740 aa).

In terms of domain architecture, tr-type G spans 23–264 (AQIRNAGTLA…MIIEHVPPPN (242 aa)). Residues 32 to 39 (AHVDHGKT), 98 to 102 (DTPGH), and 152 to 155 (NKID) each bind GTP. A Diphthamide modification is found at H605.

The protein belongs to the TRAFAC class translation factor GTPase superfamily. Classic translation factor GTPase family. EF-G/EF-2 subfamily.

The protein localises to the cytoplasm. In terms of biological role, catalyzes the GTP-dependent ribosomal translocation step during translation elongation. During this step, the ribosome changes from the pre-translocational (PRE) to the post-translocational (POST) state as the newly formed A-site-bound peptidyl-tRNA and P-site-bound deacylated tRNA move to the P and E sites, respectively. Catalyzes the coordinated movement of the two tRNA molecules, the mRNA and conformational changes in the ribosome. This chain is Elongation factor 2, found in Pyrobaculum calidifontis (strain DSM 21063 / JCM 11548 / VA1).